The sequence spans 276 residues: Ribosomal RNA small subunit methyltransferase J (276 aa).

S-adenosyl-L-methionine-binding positions include 135-136 (ER) and aspartate 191.

This sequence belongs to the methyltransferase superfamily. RsmJ family.

It is found in the cytoplasm. It carries out the reaction guanosine(1516) in 16S rRNA + S-adenosyl-L-methionine = N(2)-methylguanosine(1516) in 16S rRNA + S-adenosyl-L-homocysteine + H(+). In terms of biological role, specifically methylates the guanosine in position 1516 of 16S rRNA. This Hydrogenovibrio crunogenus (strain DSM 25203 / XCL-2) (Thiomicrospira crunogena) protein is Ribosomal RNA small subunit methyltransferase J.